We begin with the raw amino-acid sequence, 570 residues long: Sulfite reductase [NADPH] hemoprotein beta-component (570 aa).

Positions 434, 440, 479, and 483 each coordinate [4Fe-4S] cluster. Cysteine 483 provides a ligand contact to siroheme.

Belongs to the nitrite and sulfite reductase 4Fe-4S domain family. In terms of assembly, alpha(8)-beta(8). The alpha component is a flavoprotein, the beta component is a hemoprotein. The cofactor is siroheme. It depends on [4Fe-4S] cluster as a cofactor.

The catalysed reaction is hydrogen sulfide + 3 NADP(+) + 3 H2O = sulfite + 3 NADPH + 4 H(+). The protein operates within sulfur metabolism; hydrogen sulfide biosynthesis; hydrogen sulfide from sulfite (NADPH route): step 1/1. Component of the sulfite reductase complex that catalyzes the 6-electron reduction of sulfite to sulfide. This is one of several activities required for the biosynthesis of L-cysteine from sulfate. The sequence is that of Sulfite reductase [NADPH] hemoprotein beta-component from Salmonella typhi.